Here is a 271-residue protein sequence, read N- to C-terminus: Formamidopyrimidine-DNA glycosylase (271 aa).

Pro-2 (schiff-base intermediate with DNA) is an active-site residue. Glu-3 (proton donor) is an active-site residue. Residue Lys-58 is the Proton donor; for beta-elimination activity of the active site. His-91, Arg-110, and Arg-152 together coordinate DNA. An FPG-type zinc finger spans residues 237-271 (LVYGREGQPCVHCGRPIRCETIGQRSSYFCTRCQR). Arg-261 (proton donor; for delta-elimination activity) is an active-site residue.

This sequence belongs to the FPG family. Monomer. Zn(2+) is required as a cofactor.

The catalysed reaction is Hydrolysis of DNA containing ring-opened 7-methylguanine residues, releasing 2,6-diamino-4-hydroxy-5-(N-methyl)formamidopyrimidine.. It carries out the reaction 2'-deoxyribonucleotide-(2'-deoxyribose 5'-phosphate)-2'-deoxyribonucleotide-DNA = a 3'-end 2'-deoxyribonucleotide-(2,3-dehydro-2,3-deoxyribose 5'-phosphate)-DNA + a 5'-end 5'-phospho-2'-deoxyribonucleoside-DNA + H(+). Functionally, involved in base excision repair of DNA damaged by oxidation or by mutagenic agents. Acts as a DNA glycosylase that recognizes and removes damaged bases. Has a preference for oxidized purines, such as 7,8-dihydro-8-oxoguanine (8-oxoG). Has AP (apurinic/apyrimidinic) lyase activity and introduces nicks in the DNA strand. Cleaves the DNA backbone by beta-delta elimination to generate a single-strand break at the site of the removed base with both 3'- and 5'-phosphates. This is Formamidopyrimidine-DNA glycosylase from Syntrophotalea carbinolica (strain DSM 2380 / NBRC 103641 / GraBd1) (Pelobacter carbinolicus).